The primary structure comprises 526 residues: MWSSSQASTRGVIEVGRVEAGPSHFPKRPAPRNSSRVNLSRTYAIKSCSVSSRTGLCLGQCYHKKSSACKCKLGWSSQPLSSLRHHLRVHSSASEAVLTSQSDFTKLLVGNEKIGVLLLNLGGPETLDDVQPFLFNLFADPDIIRLPRLFRFLQKPLAQFISVVRAPKSKEGYASIGGGSPLRQITDAQAEALRKALCDKDIPAKVYVGMRYWHPFTEEAIEQIKRDGITKLVVLPLYPQFSISTSGSSLRLLEGIFREDEYLVNMQHTVIPSWYQREGYIKAMATLIEKELRTFSEPQKVMIFFSAHGVPLAYVEEAGDPYKAEMEECVDLIMEELEKRGITNSCTLAYQSRVGPVEWLRPYTDETIIELGQKGVKSLLAVPISFVSEHIETLEEIDVEYKELALESGIKHWGRVPALGCEPTFITDLADAVIESLPYVGAMAVSNLEARQPLVPLGSVEELLAAYDSKRDELPPPVTVWEWGWTKSAETWNGRAAMLAVLALLVLEVTTGEGFLHQWGILPLFH.

The protein belongs to the ferrochelatase family.

The protein resides in the plastid. It localises to the chloroplast. The enzyme catalyses heme b + 2 H(+) = protoporphyrin IX + Fe(2+). Its pathway is porphyrin-containing compound metabolism; protoheme biosynthesis; protoheme from protoporphyrin-IX: step 1/1. Its function is as follows. Catalyzes the ferrous insertion into protoporphyrin IX. The protein is Ferrochelatase-2, chloroplastic of Oryza sativa subsp. japonica (Rice).